We begin with the raw amino-acid sequence, 244 residues long: Methylthioribulose-1-phosphate dehydratase (244 aa).

Cys-89 is a substrate binding site. Positions 107 and 109 each coordinate Zn(2+). The active-site Proton donor/acceptor is the Glu-130. His-192 is a binding site for Zn(2+).

This sequence belongs to the aldolase class II family. MtnB subfamily. Requires Zn(2+) as cofactor.

It localises to the cytoplasm. The catalysed reaction is 5-(methylsulfanyl)-D-ribulose 1-phosphate = 5-methylsulfanyl-2,3-dioxopentyl phosphate + H2O. It functions in the pathway amino-acid biosynthesis; L-methionine biosynthesis via salvage pathway; L-methionine from S-methyl-5-thio-alpha-D-ribose 1-phosphate: step 2/6. Catalyzes the dehydration of methylthioribulose-1-phosphate (MTRu-1-P) into 2,3-diketo-5-methylthiopentyl-1-phosphate (DK-MTP-1-P). This chain is Methylthioribulose-1-phosphate dehydratase, found in Saccharomyces cerevisiae (strain AWRI1631) (Baker's yeast).